The following is a 494-amino-acid chain: Aspartyl/glutamyl-tRNA(Asn/Gln) amidotransferase subunit B (494 aa).

Belongs to the GatB/GatE family. GatB subfamily. As to quaternary structure, heterotrimer of A, B and C subunits.

The catalysed reaction is L-glutamyl-tRNA(Gln) + L-glutamine + ATP + H2O = L-glutaminyl-tRNA(Gln) + L-glutamate + ADP + phosphate + H(+). It carries out the reaction L-aspartyl-tRNA(Asn) + L-glutamine + ATP + H2O = L-asparaginyl-tRNA(Asn) + L-glutamate + ADP + phosphate + 2 H(+). In terms of biological role, allows the formation of correctly charged Asn-tRNA(Asn) or Gln-tRNA(Gln) through the transamidation of misacylated Asp-tRNA(Asn) or Glu-tRNA(Gln) in organisms which lack either or both of asparaginyl-tRNA or glutaminyl-tRNA synthetases. The reaction takes place in the presence of glutamine and ATP through an activated phospho-Asp-tRNA(Asn) or phospho-Glu-tRNA(Gln). The chain is Aspartyl/glutamyl-tRNA(Asn/Gln) amidotransferase subunit B from Protochlamydia amoebophila (strain UWE25).